Consider the following 388-residue polypeptide: F-box protein At3g49510 (388 aa).

An F-box domain is found at 1 to 47 (MTTISDLSDDLVGDILSRVPFTSLISVRSTCKKWNALSKNQIFGRKT).

This chain is F-box protein At3g49510, found in Arabidopsis thaliana (Mouse-ear cress).